The following is a 66-amino-acid chain: Large ribosomal subunit protein bL31 (66 aa).

Cys-16, Cys-18, Cys-36, and Cys-39 together coordinate Zn(2+).

Belongs to the bacterial ribosomal protein bL31 family. Type A subfamily. In terms of assembly, part of the 50S ribosomal subunit. The cofactor is Zn(2+).

In terms of biological role, binds the 23S rRNA. This Campylobacter jejuni subsp. jejuni serotype O:6 (strain 81116 / NCTC 11828) protein is Large ribosomal subunit protein bL31.